A 164-amino-acid polypeptide reads, in one-letter code: Endoribonuclease YbeY (164 aa).

His-132, His-136, and His-142 together coordinate Zn(2+).

This sequence belongs to the endoribonuclease YbeY family. The cofactor is Zn(2+).

Its subcellular location is the cytoplasm. Functionally, single strand-specific metallo-endoribonuclease involved in late-stage 70S ribosome quality control and in maturation of the 3' terminus of the 16S rRNA. The sequence is that of Endoribonuclease YbeY from Clostridium kluyveri (strain NBRC 12016).